The primary structure comprises 189 residues: Apolipoprotein D (189 aa).

A signal peptide spans 1-20; it reads MATMLLLLATLAGLFTTTEG. Gln-21 carries the post-translational modification Pyrrolidone carboxylic acid. Intrachain disulfides connect Cys-28–Cys-134 and Cys-61–Cys-185. Residues Asn-65 and Asn-98 are each glycosylated (N-linked (GlcNAc...) asparagine).

This sequence belongs to the calycin superfamily. Lipocalin family. As to quaternary structure, homodimer. In terms of tissue distribution, expressed in liver, kidney, bladder, adrenal, cerebrum, duodenum, testis, lung, spleen, pancreas, heart and skin.

Its subcellular location is the secreted. Functionally, APOD occurs in the macromolecular complex with lecithin-transport and binding of bilin. Appears to be able to transport a variety of ligands in a number of different contexts. The sequence is that of Apolipoprotein D (Apod) from Rattus norvegicus (Rat).